Consider the following 532-residue polypeptide: Ankyrin repeat-containing protein At2g01680 (532 aa).

7 ANK repeats span residues 9 to 38 (LTHQ…GDEL), 58 to 89 (AGET…TVKI), 93 to 122 (SDMN…ELCR), 127 to 156 (SNTS…SCAM), 161 to 190 (NGKT…AIVG), 195 to 224 (KGQT…TILN), and 229 to 259 (KGNT…EVNA). The next 4 membrane-spanning stretches (helical) occupy residues 354 to 374 (ITVV…NLPG), 396 to 416 (VFCL…VVQI), 436 to 456 (LMWA…FAVV), and 467 to 487 (ITLL…YFVF).

It is found in the membrane. The polypeptide is Ankyrin repeat-containing protein At2g01680 (Arabidopsis thaliana (Mouse-ear cress)).